A 785-amino-acid polypeptide reads, in one-letter code: Peptide transporter family 2 (785 aa).

The next 9 helical transmembrane spans lie at 46–66 (FSFY…LNFS), 72–92 (VLFH…SILA), 99–119 (FWTI…LAFS), 134–154 (LLGL…VSAF), 167–187 (ISLF…ISMW), 208–228 (FGIP…GSFW), 303–323 (VIVM…QGST), 345–365 (MGVL…SIVY), and 382–402 (AGGG…QLFV). Asn-467 is a glycosylation site (N-linked (GlcNAc...) asparagine). 3 consecutive transmembrane segments (helical) span residues 670–690 (ILWQ…FSIT), 711–731 (WLFT…LNIF), and 738–758 (MFVF…LAVF).

This sequence belongs to the major facilitator superfamily. Proton-dependent oligopeptide transporter (POT/PTR) (TC 2.A.17) family. In terms of tissue distribution, expressed in vulval, pharyngeal and anal muscles.

The protein resides in the membrane. Its function is as follows. Proton-dependent uptake of di- or tripeptides, and to a minor extent tetrapeptides. Transport is independent of sodium and chloride ions. Protein shows high affinity to peptide substrates. The protein is Peptide transporter family 2 (pept-2) of Caenorhabditis elegans.